Here is a 265-residue protein sequence, read N- to C-terminus: MEMLLPMCLLLVSLCLGQCQALGSFVHCEPCDDKAMSMCPPTPVGCELVKEPGCGCCMTCALAEGHRCGVYTEHCAKGLRCLPEQGEEKPLHALLHGRGVCLNLKNHRDQSKIDRESREEDPTTSETEDIYQSKHRGKMRLSDQKAIALNTFRQKKHSQSRIVSVEKVQSPSTPEHSIEIDMGPCRRQVETLMQEMKLSHRVYPRAFYLPNCDRKGFYKRKQCKPSRGRKRGLCWCVDKYGLKLPGIDYVNGDLQCHSFDSSNTE.

The first 21 residues, methionine 1–alanine 21, serve as a signal peptide directing secretion. Residues serine 24 to leucine 104 enclose the IGFBP N-terminal domain. 6 disulfides stabilise this stretch: cysteine 28-cysteine 54, cysteine 31-cysteine 56, cysteine 39-cysteine 57, cysteine 46-cysteine 60, cysteine 68-cysteine 81, and cysteine 75-cysteine 101. The segment covering serine 111 to aspartate 121 has biased composition (basic and acidic residues). The segment at serine 111–glycine 137 is disordered. Residues methionine 182–cysteine 256 form the Thyroglobulin type-1 domain. Disulfide bonds link cysteine 185–cysteine 212, cysteine 223–cysteine 234, and cysteine 236–cysteine 256.

It localises to the secreted. IGF-binding proteins prolong the half-life of the IGFs and have been shown to either inhibit or stimulate the growth promoting effects of the IGFs on cell culture. They alter the interaction of IGFs with their cell surface receptors. Promotes anterior neural development by stimulating insulin growth factor (IGF) signaling via IGF receptors. The protein is Insulin-like growth factor-binding protein 5 of Xenopus laevis (African clawed frog).